Consider the following 399-residue polypeptide: Beta-1,6-galactosyltransferase GALT31A (399 aa).

Over 1-12 the chain is Cytoplasmic; sequence MGMGRYQKSATS. A helical; Signal-anchor for type II membrane protein transmembrane segment spans residues 13–35; that stretch reads GVSARWVFVLCISSFLLGVLVVN. Residues 36 to 399 are Lumenal-facing; that stretch reads RLLASFETVD…GDGAIWHSSF (364 aa).

This sequence belongs to the glycosyltransferase 31 family. Interacts with GALT29A. Mn(2+) serves as cofactor.

It is found in the golgi apparatus membrane. The protein operates within protein modification; protein glycosylation. In terms of biological role, beta-galactosyltransferase involved in elongation of beta-1,6-linked galactan side chains on arabinogalactan proteins. Required for the progression of embryogenesis beyond the globular stage. Beta-galactosyltransferase involved in the biosynthesis of type II arabinogalactan. Transfers galactose from UDP-galactose to a mixture of various oligosaccharides derived from arabinogalactan proteins. Forms a complex with GALT29A that can work cooperatively to enhance the activities of adding galactose residues at O6 positions to beta-1,6-linked galactan and beta-1,3-linked galactan. The polypeptide is Beta-1,6-galactosyltransferase GALT31A (Arabidopsis thaliana (Mouse-ear cress)).